The chain runs to 540 residues: Extracellular matrix protein 1 (540 aa).

The first 19 residues, 1–19 (MGTTARAALVLTYLAVASA), serve as a signal peptide directing secretion. Disordered stretches follow at residues 41-85 (VGYA…EATP) and 120-175 (LQHP…PSPD). Composition is skewed to polar residues over residues 71-85 (GQSQ…EATP) and 146-156 (NAAQHCQQDRS). 2 consecutive repeat copies span residues 150–279 (HCQQ…QPHY) and 283–405 (ACPS…YPNY). The interval 150–405 (HCQQDRSQGG…FARRAPYPNY (256 aa)) is 2 X approximate repeats. A glycan (N-linked (GlcNAc...) asparagine) is linked at Asn-354. Asn-444 is a glycosylation site (N-linked (GlcNAc...) (complex) asparagine). Residues 515 to 540 (ENAKGQGEQGSTGGTNISSTSEPKEE) are disordered. Over residues 528–540 (GTNISSTSEPKEE) the composition is skewed to low complexity. An N-linked (GlcNAc...) asparagine glycan is attached at Asn-530.

As to quaternary structure, interacts (via C-terminus) with HSPG2 (via C-terminus). Interacts with EFEMP1/FBLN3 and LAMB3. Interacts with MMP9. As to expression, expressed in breast cancer tissues. Little or no expression observed in normal breast tissues. Expressed in skin; wide expression is observed throughout the dermis with minimal expression in the epidermis.

The protein localises to the secreted. It is found in the extracellular space. The protein resides in the extracellular matrix. In terms of biological role, involved in endochondral bone formation as negative regulator of bone mineralization. Stimulates the proliferation of endothelial cells and promotes angiogenesis. Inhibits MMP9 proteolytic activity. In Homo sapiens (Human), this protein is Extracellular matrix protein 1 (ECM1).